The sequence spans 260 residues: Membrane protein insertase YidC 1 (260 aa).

A signal peptide spans 1 to 22; that stretch reads MLKSYRAVLVSLSLLFVFVLSG. Cys23 carries the N-palmitoyl cysteine lipid modification. The S-diacylglycerol cysteine moiety is linked to residue Cys23. A run of 5 helical transmembrane segments spans residues 29–49, 52–72, 133–153, 164–184, and 213–233; these read IDAHSTGIWDHYFVYPISFMI, VAHHIPGASFGIAIIIMTLVI, LAGCWPLLIQMPIFSALYYAI, FLWVNLGHADPYHILPIIAAL, and MPAMILFMGFAAPSGLVLYWI.

This sequence belongs to the OXA1/ALB3/YidC family. Type 2 subfamily.

The protein localises to the cell membrane. Functionally, required for the insertion and/or proper folding and/or complex formation of integral membrane proteins into the membrane. Involved in integration of membrane proteins that insert both dependently and independently of the Sec translocase complex, as well as at least some lipoproteins. The polypeptide is Membrane protein insertase YidC 1 (Bacillus cereus (strain ATCC 14579 / DSM 31 / CCUG 7414 / JCM 2152 / NBRC 15305 / NCIMB 9373 / NCTC 2599 / NRRL B-3711)).